The chain runs to 547 residues: Probable hydroxyacid-oxoacid transhydrogenase, mitochondrial (547 aa).

The protein belongs to the iron-containing alcohol dehydrogenase family. Hydroxyacid-oxoacid transhydrogenase subfamily.

The protein localises to the mitochondrion. The catalysed reaction is (S)-3-hydroxybutanoate + 2-oxoglutarate = (R)-2-hydroxyglutarate + acetoacetate. The enzyme catalyses 4-hydroxybutanoate + 2-oxoglutarate = (R)-2-hydroxyglutarate + succinate semialdehyde. In terms of biological role, catalyzes the cofactor-independent reversible oxidation of gamma-hydroxybutyrate (GHB) to succinic semialdehyde (SSA) coupled to reduction of 2-ketoglutarate (2-KG) to D-2-hydroxyglutarate (D-2-HG). L-3-hydroxybutyrate (L-3-OHB) is also a substrate for HOT when using 2-KG as hydrogen acceptor, resulting in the formation of D-2-HG. This chain is Probable hydroxyacid-oxoacid transhydrogenase, mitochondrial (adhfe1), found in Dictyostelium discoideum (Social amoeba).